The primary structure comprises 450 residues: UDP-N-acetylmuramoylalanine--D-glutamate ligase (450 aa).

Position 119–125 (119–125 (GSNGKTT)) interacts with ATP.

This sequence belongs to the MurCDEF family.

It is found in the cytoplasm. It catalyses the reaction UDP-N-acetyl-alpha-D-muramoyl-L-alanine + D-glutamate + ATP = UDP-N-acetyl-alpha-D-muramoyl-L-alanyl-D-glutamate + ADP + phosphate + H(+). It participates in cell wall biogenesis; peptidoglycan biosynthesis. In terms of biological role, cell wall formation. Catalyzes the addition of glutamate to the nucleotide precursor UDP-N-acetylmuramoyl-L-alanine (UMA). This chain is UDP-N-acetylmuramoylalanine--D-glutamate ligase, found in Bacillus anthracis (strain A0248).